The chain runs to 343 residues: Methylthioribose-1-phosphate isomerase (343 aa).

Residues 48-50 (RGA), Arg-88, and Gln-193 contribute to the substrate site. The active-site Proton donor is the Asp-234. 244–245 (NK) provides a ligand contact to substrate.

It belongs to the eIF-2B alpha/beta/delta subunits family. MtnA subfamily.

The catalysed reaction is 5-(methylsulfanyl)-alpha-D-ribose 1-phosphate = 5-(methylsulfanyl)-D-ribulose 1-phosphate. It functions in the pathway amino-acid biosynthesis; L-methionine biosynthesis via salvage pathway; L-methionine from S-methyl-5-thio-alpha-D-ribose 1-phosphate: step 1/6. Functionally, catalyzes the interconversion of methylthioribose-1-phosphate (MTR-1-P) into methylthioribulose-1-phosphate (MTRu-1-P). In Thermotoga petrophila (strain ATCC BAA-488 / DSM 13995 / JCM 10881 / RKU-1), this protein is Methylthioribose-1-phosphate isomerase.